Reading from the N-terminus, the 690-residue chain is MAEDLILERCDLQLEVNGRDHRTADLCRERLVLRRGQPFWLTLHFEGRGYEAGVDTLTFNAVTGPDPSEEAGTMARFSLSSAVEGGTWSASAVDQQDSTVSLLLSTPADAPIGLYRLSLEASTGYQGSSFVLGHFILLYNPRCPADAVYMDSDQERQEYVLTQQGFIYQGSAKFINGIPWNFGQFEDGILDICLMLLDTNPKFLKNAGQDCSRRSRPVYVGRVVSAMVNCNDDQGVLQGRWDNNYSDGVSPMSWIGSVDILRRWKDYGCQRVKYGQCWVFAAVACTVLRCLGIPTRVVTNFNSAHDQNSNLLIEYFRNESGEIEGNKSEMIWNFHCWVESWMTRPDLEPGYEGWQALDPTPQEKSEGTYCCGPVPVRAIKEGHLNVKYDAPFVFAEVNADVVNWIRQKDGSLRKSINHLVVGLKISTKSVGRDEREDITHTYKYPEGSEEEREAFVRANHLNKLATKEEAQEETGVAMRIRVGQNMTMGSDFDIFAYITNGTAESHECQLLLCARIVSYNGVLGPVCSTNDLLNLTLDPFSENSIPLHILYEKYGDYLTESNLIKVRGLLIEPAANSYVLAERDIYLENPEIKIRVLGEPKQNRKLIAEVSLKNPLPVPLLGCIFTVEGAGLTKDQKSVEVPDPVEAGEQAKVRVDLLPTEVGLHKLVVNFECDKLKAVKGYRNVIIGPA.

Alanine 2 is modified (N-acetylalanine). Disulfide bonds link cysteine 230–cysteine 370 and cysteine 370–cysteine 371. Residues cysteine 277, histidine 335, and aspartate 358 contribute to the active site. Residues asparagine 398, aspartate 400, glutamate 436, glutamate 446, and glutamate 451 each contribute to the Ca(2+) site. The residue at position 467 (lysine 467) is an N6-acetyllysine. 479 to 486 lines the GTP pocket; the sequence is RIRVGQNM. Glutamate 542 serves as a coordination point for Ca(2+). 583 to 586 contacts GTP; that stretch reads RDIY. Glutamine 636 participates in a covalent cross-link: Isoglutamyl lysine isopeptide (Gln-Lys) (interchain with K-?).

The protein belongs to the transglutaminase superfamily. Transglutaminase family. As to quaternary structure, monomer. Interacts with phospholipase C; promoting alpha-1 adrenergic receptor signaling. Interacts with PLCD1. It depends on Ca(2+) as a cofactor. In terms of processing, disulfide bond formation inactivates the calcium-dependent acyltransferase activity. Cys-370 can form disulfide bonds with both Cys-230 and Cys-371: formation of a disulfide bond between Cys-230 and Cys-370 facilitates formation of the disulfide between Cys-370 and Cys-371, which promotes inactivation of the acyltransferase activity. May also form interchain disulfids between Cys-230 and Cys-370. Ca(2+) protects against disulfide bond formation and inactivation. Auto-transglutaminated: Forms covalent cross-links mediated by transglutaminase between Gln-636 and the epsilon-amino group of a lysine residue of itself or HMGB1, forming homopolymers and heteropolymers, respectively. Post-translationally, S-nitrosylated, leading to inactivation of the acyltransferase activity.

It localises to the cytoplasm. The protein localises to the cytosol. The protein resides in the nucleus. Its subcellular location is the chromosome. It is found in the secreted. It localises to the extracellular space. The protein localises to the extracellular matrix. The protein resides in the cell membrane. Its subcellular location is the mitochondrion. The enzyme catalyses L-glutaminyl-[protein] + L-lysyl-[protein] = [protein]-L-lysyl-N(6)-5-L-glutamyl-[protein] + NH4(+). It carries out the reaction L-glutaminyl-[protein] + serotonin = 5-serotonyl-L-glutamyl-[protein] + NH4(+). It catalyses the reaction L-glutaminyl-[protein] + dopamine = 5-dopaminyl-L-glutamyl-[protein] + NH4(+). The catalysed reaction is L-glutaminyl-[protein] + histamine = 5-histaminyl-L-glutamyl-[protein] + NH4(+). The enzyme catalyses L-glutaminyl-[protein] + (R)-noradrenaline = 5-(R)-noradrenalinyl-L-glutamyl-[protein] + NH4(+). It carries out the reaction L-glutaminyl-[protein] + H2O = L-glutamyl-[protein] + NH4(+). Its activity is regulated as follows. Acyltransferase activity is regulated by the binding of GTP and Ca(2+): inactivated by GTP, which stabilizes its closed structure, thereby obstructing the accessibility of substrates to the active sites. In contrast, Ca(2+) acts as a cofactor by inducing conformational change to the active open form. In absence of Ca(2+), Mg(2+) may bind Ca(2+)-binding sites, promoting GTP-binding and subsequent inhibition of the acyltransferase activity. Extracellularly reduced and activated by CLIC3. Calcium-dependent acyltransferase that catalyzes the formation of covalent bonds between peptide-bound glutamine and various primary amines, such as gamma-amino group of peptide-bound lysine, or mono- and polyamines, thereby producing cross-linked or aminated proteins, respectively. Involved in many biological processes, such as bone development, angiogenesis, wound healing, cellular differentiation, chromatin modification and apoptosis. Acts as a protein-glutamine gamma-glutamyltransferase by mediating the cross-linking of proteins, such as ACO2, HSPB6, FN1, HMGB1, RAP1GDS1, SLC25A4/ANT1, SPP1 and WDR54. Under physiological conditions, the protein cross-linking activity is inhibited by GTP; inhibition is relieved by Ca(2+) in response to various stresses. When secreted, catalyzes cross-linking of proteins of the extracellular matrix, such as FN1 and SPP1 resulting in the formation of scaffolds. Plays a key role during apoptosis, both by (1) promoting the cross-linking of cytoskeletal proteins resulting in condensation of the cytoplasm, and by (2) mediating cross-linking proteins of the extracellular matrix, resulting in the irreversible formation of scaffolds that stabilize the integrity of the dying cells before their clearance by phagocytosis, thereby preventing the leakage of harmful intracellular components. In addition to protein cross-linking, can use different monoamine substrates to catalyze a vast array of protein post-translational modifications: mediates aminylation of serotonin, dopamine, noradrenaline or histamine into glutamine residues of target proteins to generate protein serotonylation, dopaminylation, noradrenalinylation or histaminylation, respectively. Mediates protein serotonylation of small GTPases during activation and aggregation of platelets, leading to constitutive activation of these GTPases. Plays a key role in chromatin organization by mediating serotonylation and dopaminylation of histone H3. Catalyzes serotonylation of 'Gln-5' of histone H3 (H3Q5ser) during serotonergic neuron differentiation, thereby facilitating transcription. Acts as a mediator of neurotransmission-independent role of nuclear dopamine in ventral tegmental area (VTA) neurons: catalyzes dopaminylation of 'Gln-5' of histone H3 (H3Q5dop), thereby regulating relapse-related transcriptional plasticity in the reward system. Regulates vein remodeling by mediating serotonylation and subsequent inactivation of ATP2A2/SERCA2. Also acts as a protein deamidase by mediating the side chain deamidation of specific glutamine residues of proteins to glutamate. Catalyzes specific deamidation of protein gliadin, a component of wheat gluten in the diet. May also act as an isopeptidase cleaving the previously formed cross-links. Also able to participate in signaling pathways independently of its acyltransferase activity: acts as a signal transducer in alpha-1 adrenergic receptor-mediated stimulation of phospholipase C-delta (PLCD) activity and is required for coupling alpha-1 adrenergic agonists to the stimulation of phosphoinositide lipid metabolism. The sequence is that of Protein-glutamine gamma-glutamyltransferase 2 from Cavia cutleri (Guinea pig).